An 82-amino-acid polypeptide reads, in one-letter code: Small ribosomal subunit protein bS16 (82 aa).

The protein belongs to the bacterial ribosomal protein bS16 family.

The protein is Small ribosomal subunit protein bS16 of Shewanella sp. (strain ANA-3).